We begin with the raw amino-acid sequence, 133 residues long: MTGGKSGGKASGSKSSQSRSSKAGLAFPVGRVHRLLRKGNYAQRVGAGAPVYLAAVLEYLAAEILELAGNAARDNKKTRIIPRHLQLAIRNDEELNKLLGHVTIAQGGVMPYIHQNLLPKKTPKTGKNPSQEL.

A compositionally biased stretch (gly residues) spans M1–A10. A disordered region spans residues M1 to L25. 2 positions are modified to N6-acetyllysine: K5 and K9. Residues S11–G24 are compositionally biased toward low complexity. Position 106 is an N5-methylglutamine (Q106). A Phosphoserine modification is found at S130. The short motif at S130–Q131 is the [ST]-Q motif element.

Belongs to the histone H2A family. The nucleosome is a histone octamer containing two molecules each of H2A, H2B, H3 and H4 assembled in one H3-H4 heterotetramer and two H2A-H2B heterodimers. The octamer wraps approximately 147 bp of DNA. In terms of processing, phosphorylated to form H2AS128ph (gamma-H2A) in response to DNA double-strand breaks (DSBs) generated by exogenous genotoxic agents and by stalled replication forks. Phosphorylation is dependent on the DNA damage checkpoint kinases MEC1/ATR and TEL1/ATM, spreads on either side of a detected DSB site and may mark the surrounding chromatin for recruitment of proteins required for DNA damage signaling and repair. Gamma-H2A is removed from the DNA prior to the strand invasion-primer extension step of the repair process and subsequently dephosphorylated. Dephosphorylation is necessary for efficient recovery from the DNA damage checkpoint. Acetylated by ESA1 to form H2AK4ac and H2AK7ac.

The protein localises to the nucleus. It localises to the chromosome. Core component of nucleosome which plays a central role in DNA double strand break (DSB) repair. Nucleosomes wrap and compact DNA into chromatin, limiting DNA accessibility to the cellular machineries which require DNA as a template. Histones thereby play a central role in transcription regulation, DNA repair, DNA replication and chromosomal stability. DNA accessibility is regulated via a complex set of post-translational modifications of histones, also called histone code, and nucleosome remodeling. The chain is Histone H2A (HTA1) from Coccidioides immitis (strain RS) (Valley fever fungus).